The following is a 110-amino-acid chain: MKFVLLFGVFLVTLFSYSSAEMLDDFDQADEDELLSLIEKEEARKDCIPKHHECTNNKHGCCRGHLFKYKCQCTTVVTQSGEETERCFCGTPPHHKAAELVVGFGKKIFG.

The N-terminal stretch at 1–20 (MKFVLLFGVFLVTLFSYSSA) is a signal peptide. A propeptide spanning residues 21 to 44 (EMLDDFDQADEDELLSLIEKEEAR) is cleaved from the precursor. Disulfide bonds link Cys-47–Cys-62, Cys-54–Cys-71, Cys-61–Cys-89, and Cys-73–Cys-87.

Belongs to the neurotoxin 19 (CSTX) family. 03 subfamily. As to expression, expressed by the venom gland.

It is found in the secreted. The protein is U1-lycotoxin-Ls1kk of Lycosa singoriensis (Wolf spider).